The sequence spans 597 residues: Elongation factor 4 (597 aa).

One can recognise a tr-type G domain in the interval 2-184 (KHIRNFSIIA…NIVSAIPAPE (183 aa)). GTP is bound by residues 14-19 (DHGKST) and 131-134 (NKID).

Belongs to the TRAFAC class translation factor GTPase superfamily. Classic translation factor GTPase family. LepA subfamily.

The protein resides in the cell inner membrane. The catalysed reaction is GTP + H2O = GDP + phosphate + H(+). Required for accurate and efficient protein synthesis under certain stress conditions. May act as a fidelity factor of the translation reaction, by catalyzing a one-codon backward translocation of tRNAs on improperly translocated ribosomes. Back-translocation proceeds from a post-translocation (POST) complex to a pre-translocation (PRE) complex, thus giving elongation factor G a second chance to translocate the tRNAs correctly. Binds to ribosomes in a GTP-dependent manner. The sequence is that of Elongation factor 4 from Vibrio parahaemolyticus serotype O3:K6 (strain RIMD 2210633).